A 418-amino-acid chain; its full sequence is MTIAEQVAQIAHEARQASFVLSRLSTRVKNELLLAMAEALEQQAPHLIAENAKDLEEGKQKGLSSAMLDRLMLDAKRISAMADALREVAALPDPVGEVTKMWKRPNNLMVGKMRIPLGVIGIIFEARPNVTADAAALCLKAGNAVILRGGKEAINSNRAIAAILREAMVSKGVPAGALALIPFTDRQGVLEMLKQEECIDLIIPRGGEGLIRFVTENSRIPVIKHYKGVCHIFVDESADFDMAERIIINAKTQRPGVCNALETLLIHESVAAAFIPRIASILGGMQVELRGDERFRALAPQAKPASEEDWYAEYLELILACRVVDDLDQAIDHINRYGSLHTESIITSDYGRAQRFIREVNSSCVVVNASTRFADGNQLGLGAEIGISTTKLHSFGPMGLEDLTTTKFIVYGDGQVRE.

This sequence belongs to the gamma-glutamyl phosphate reductase family.

Its subcellular location is the cytoplasm. It catalyses the reaction L-glutamate 5-semialdehyde + phosphate + NADP(+) = L-glutamyl 5-phosphate + NADPH + H(+). The protein operates within amino-acid biosynthesis; L-proline biosynthesis; L-glutamate 5-semialdehyde from L-glutamate: step 2/2. In terms of biological role, catalyzes the NADPH-dependent reduction of L-glutamate 5-phosphate into L-glutamate 5-semialdehyde and phosphate. The product spontaneously undergoes cyclization to form 1-pyrroline-5-carboxylate. The polypeptide is Gamma-glutamyl phosphate reductase (Pelobacter propionicus (strain DSM 2379 / NBRC 103807 / OttBd1)).